The following is a 421-amino-acid chain: UPF0415 protein C7orf25 homolog (421 aa).

It belongs to the UPF0415 family.

The chain is UPF0415 protein C7orf25 homolog from Rattus norvegicus (Rat).